The chain runs to 84 residues: M-zodatoxin-Lt2a (84 aa).

Positions 1–22 are cleaved as a signal peptide; it reads MKYFVIALALAVALVCIAESTA. A propeptide spanning residues 23–58 is cleaved from the precursor; the sequence is YEVNEELENELDDLDDAAWLAVAEELQGLEDFEESR. A Processing quadruplet motif motif is present at residues 55 to 58; sequence EESR.

Cleavage of the propeptide depends on the processing quadruplet motif (XXXR, with at least one of X being E). As to expression, expressed by the venom gland.

The protein resides in the secreted. Its function is as follows. It has antimicrobial activity against Gram-positive bacteria (A.globiformis VKM Ac-1112 (MIC=0.7 uM), and B.subtilis VKM B-501 (MIC=0.4 uM)), Gram-negative bacteria (E.coli DH5-alpha (MIC=1.0 uM), E.coli MH1 (MIC=0.7 uM), and P.aeruginosa PAO1 (MIC=6.7 uM)), and yeasts (P.pastoris GS115 (MIC=6.7 uM), and S.cerevisiae Y190 (MIC=54 uM)). Also has a strong hemolytic activity against rabbit erythrocytes. Causes paralysis, but is not lethal when injected into insect (M.domestica) larvae. The polypeptide is M-zodatoxin-Lt2a (Lachesana tarabaevi (Spider)).